A 602-amino-acid polypeptide reads, in one-letter code: Fumarate reductase flavoprotein subunit (602 aa).

Residues 12–16 (GAGGA), 36–38 (ISK), 44–52 (SHTVAAEGG), 156–158 (HFV), 192–193 (AT), and D212 contribute to the FAD site. H45 carries the post-translational modification Tele-8alpha-FAD histidine. Residues H233 and R249 contribute to the active site. FAD is bound by residues 356–357 (HY), E380, and 391–397 (RLGSNSL). The tract at residues 581–602 (YGGEADAADKAEAANKKEKANG) is disordered. Positions 587–602 (AADKAEAANKKEKANG) are enriched in basic and acidic residues.

Belongs to the FAD-dependent oxidoreductase 2 family. FRD/SDH subfamily. As to quaternary structure, part of an enzyme complex containing four subunits: a flavoprotein (FrdA), an iron-sulfur protein (FrdB), and two hydrophobic anchor proteins (FrdC and FrdD). Can be cross-linked to SdhE. Purified from membrane fractions associated with protoporphyrinogen IX dehydrogenase (hemG). FAD serves as cofactor.

The protein resides in the cell inner membrane. The enzyme catalyses a quinone + succinate = fumarate + a quinol. The catalysed reaction is a menaquinone + succinate = a menaquinol + fumarate. Inhibited by oxaloacetate, a substrate analog. Its function is as follows. Two distinct, membrane-bound, FAD-containing enzymes are responsible for the catalysis of fumarate and succinate interconversion; fumarate reductase is used during anaerobic growth, and succinate dehydrogenase is used during aerobic growth. The QFR enzyme complex binds 2 quinones in or near the membrane; 1 near the [3Fe-4S] cluster (QP is proximal to the [3Fe-4S] cluster, on the cytoplasmic side of the membrane) while QD (the distal cluster) is on the other side of the membrane. It is not clear if both of the quinol-binding sites are functionally relevant. The chain is Fumarate reductase flavoprotein subunit (frdA) from Escherichia coli (strain K12).